The chain runs to 307 residues: Ubiquinol oxidase subunit 2 (307 aa).

The signal sequence occupies residues 1–23; the sequence is MKNKLLARVARLGGLSSALLLAG. The N-palmitoyl cysteine moiety is linked to residue cysteine 24. Residue cysteine 24 is the site of S-diacylglycerol cysteine attachment. The next 2 helical transmembrane spans lie at 46–66 and 87–107; these read STVA…LFAW and IEVT…VITY.

This sequence belongs to the cytochrome c oxidase subunit 2 family. In terms of assembly, heterotetramer of the subunits 1, 2, 3 and 4.

Its subcellular location is the cell membrane. The polypeptide is Ubiquinol oxidase subunit 2 (cyaB) (Acetobacter aceti).